We begin with the raw amino-acid sequence, 102 residues long: Small ribosomal subunit protein uS10 (102 aa).

Belongs to the universal ribosomal protein uS10 family. Part of the 30S ribosomal subunit.

In terms of biological role, involved in the binding of tRNA to the ribosomes. This is Small ribosomal subunit protein uS10 from Thermotoga maritima (strain ATCC 43589 / DSM 3109 / JCM 10099 / NBRC 100826 / MSB8).